We begin with the raw amino-acid sequence, 196 residues long: Fe/S biogenesis protein NfuA (196 aa).

Residues cysteine 154 and cysteine 157 each coordinate [4Fe-4S] cluster.

It belongs to the NfuA family. Homodimer. Requires [4Fe-4S] cluster as cofactor.

In terms of biological role, involved in iron-sulfur cluster biogenesis. Binds a 4Fe-4S cluster, can transfer this cluster to apoproteins, and thereby intervenes in the maturation of Fe/S proteins. Could also act as a scaffold/chaperone for damaged Fe/S proteins. The protein is Fe/S biogenesis protein NfuA of Blochmanniella pennsylvanica (strain BPEN).